The chain runs to 455 residues: Phosphoglucosamine mutase (455 aa).

The active-site Phosphoserine intermediate is S108. S108, D248, D250, and D252 together coordinate Mg(2+). Position 108 is a phosphoserine (S108).

The protein belongs to the phosphohexose mutase family. The cofactor is Mg(2+). Post-translationally, activated by phosphorylation.

The catalysed reaction is alpha-D-glucosamine 1-phosphate = D-glucosamine 6-phosphate. Its function is as follows. Catalyzes the conversion of glucosamine-6-phosphate to glucosamine-1-phosphate. This Leuconostoc mesenteroides subsp. mesenteroides (strain ATCC 8293 / DSM 20343 / BCRC 11652 / CCM 1803 / JCM 6124 / NCDO 523 / NBRC 100496 / NCIMB 8023 / NCTC 12954 / NRRL B-1118 / 37Y) protein is Phosphoglucosamine mutase.